The chain runs to 387 residues: Probable purine permease 6 (387 aa).

Residues Met1–Ser24 form a disordered region. Positions Gln9–Ser24 are enriched in basic and acidic residues. The next 10 helical transmembrane spans lie at Leu36 to Gly56, Trp68 to Leu88, Phe106 to Leu126, Phe129 to Phe149, Ile162 to Ile182, Tyr201 to Leu221, Ile238 to Phe258, Ile283 to Ile303, Phe309 to Phe329, and Met333 to Tyr353. Residues Pro362–Ala387 form a disordered region. The span at Gln370 to Asp381 shows a compositional bias: basic and acidic residues.

Belongs to the purine permeases (TC 2.A.7.14) family.

Its subcellular location is the membrane. The chain is Probable purine permease 6 (PUP6) from Arabidopsis thaliana (Mouse-ear cress).